A 216-amino-acid polypeptide reads, in one-letter code: Fibroblast growth factor 17 (216 aa).

The N-terminal stretch at 1–22 (MGAARLLPNLTLCLQLLILCCQ) is a signal peptide. Asn-137 carries N-linked (GlcNAc...) asparagine glycosylation. The tract at residues 195-216 (FEFVGSAPTRRTKRTRRPQSQT) is disordered. The span at 204–216 (RRTKRTRRPQSQT) shows a compositional bias: basic residues.

It belongs to the heparin-binding growth factors family. As to quaternary structure, interacts with FGFR3 and FGFR4.

It is found in the secreted. Functionally, plays an important role in the regulation of embryonic development and as signaling molecule in the induction and patterning of the embryonic brain. Required for normal brain development. This chain is Fibroblast growth factor 17 (Fgf17), found in Mus musculus (Mouse).